A 242-amino-acid chain; its full sequence is Probable transcriptional regulatory protein Bcen2424_2294 (242 aa).

It belongs to the TACO1 family.

It is found in the cytoplasm. The polypeptide is Probable transcriptional regulatory protein Bcen2424_2294 (Burkholderia cenocepacia (strain HI2424)).